Consider the following 1074-residue polypeptide: BRD4-interacting chromatin-remodeling complex-associated protein-like (1074 aa).

4 disordered regions span residues 542–603 (AVSS…NTPG), 620–689 (TSPI…GQKR), 834–874 (TPLD…HDQF), and 887–952 (GNIS…SKLP). Composition is skewed to polar residues over residues 544–576 (SSASTAHPTLGPTVQSGAPGSNFTGDQLTQANR), 591–603 (ASKSPSTLSNTPG), 620–629 (TSPIPTSKTT), and 660–680 (GATQAQPESSVGSSPSQTAVQ). Ser-621 is modified (phosphoserine). Composition is skewed to basic and acidic residues over residues 889–904 (ISKKSEGHSRTLKFDR), 913–925 (PPEDKGGRRDPAK), and 934–948 (EGHRKSLPRPDHGSE). Phosphoserine is present on Ser-976.

Component of the multiprotein chromatin-remodeling complexes SWI/SNF: SWI/SNF-A (BAF), SWI/SNF-B (PBAF) and related complexes. The canonical complex contains a catalytic subunit (either SMARCA4/BRG1/BAF190A or SMARCA2/BRM/BAF190B) and at least SMARCE1, ACTL6A/BAF53, SMARCC1/BAF155, SMARCC2/BAF170, and SMARCB1/SNF5/BAF47. Other subunits specific to each of the complexes may also be present permitting several possible combinations developmentally and tissue specific. Component of the SWI/SNF (GBAF) subcomplex, which includes at least BICRA or BICRAL (mutually exclusive), BRD9, SS18, the core BAF subunits, SMARCA2/BRM, SMARCA4/BRG1/BAF190A, ACTL6A/BAF53, SMARCC1/BAF155, and SMARCD1/BAF60A.

Functionally, component of SWI/SNF chromatin remodeling subcomplex GBAF that carries out key enzymatic activities, changing chromatin structure by altering DNA-histone contacts within a nucleosome in an ATP-dependent manner. This Mus musculus (Mouse) protein is BRD4-interacting chromatin-remodeling complex-associated protein-like.